The sequence spans 327 residues: Beta-ketoacyl-[acyl-carrier-protein] synthase III (327 aa).

Active-site residues include cysteine 114 and histidine 254. The tract at residues 255 to 259 (QANQR) is ACP-binding. Asparagine 284 is an active-site residue.

This sequence belongs to the thiolase-like superfamily. FabH family. In terms of assembly, homodimer.

It is found in the cytoplasm. The enzyme catalyses malonyl-[ACP] + acetyl-CoA + H(+) = 3-oxobutanoyl-[ACP] + CO2 + CoA. It participates in lipid metabolism; fatty acid biosynthesis. In terms of biological role, catalyzes the condensation reaction of fatty acid synthesis by the addition to an acyl acceptor of two carbons from malonyl-ACP. Catalyzes the first condensation reaction which initiates fatty acid synthesis and may therefore play a role in governing the total rate of fatty acid production. Possesses both acetoacetyl-ACP synthase and acetyl transacylase activities. Its substrate specificity determines the biosynthesis of branched-chain and/or straight-chain of fatty acids. The sequence is that of Beta-ketoacyl-[acyl-carrier-protein] synthase III from Levilactobacillus brevis (strain ATCC 367 / BCRC 12310 / CIP 105137 / JCM 1170 / LMG 11437 / NCIMB 947 / NCTC 947) (Lactobacillus brevis).